The sequence spans 336 residues: uncharacterized protein (336 aa).

Residues 1 to 23 (MKTRHLVYLAFALLGLGLAGLLE) form the signal peptide. The next 3 helical transmembrane spans lie at 34-54 (LLSLNRLYLALAGLLTGLLLG), 75-95 (VVVATTLGSTIGLLLAVLLTT), and 106-126 (VHSLLLALGLVALFVYLALGY). One can recognise a PINc domain in the interval 144-255 (VLDTSVLVDG…MARIYGVKAL (112 aa)). Aspartate 222 is a binding site for Mg(2+). The TRAM domain maps to 267–328 (QLQVGDTLKL…IQTQVGRLFF (62 aa)).

The protein belongs to the PINc/VapC protein family. Requires Mg(2+) as cofactor.

Its subcellular location is the membrane. Functionally, part of a toxin-antitoxin (TA) system. An RNase. This is an uncharacterized protein from Thermus thermophilus (strain ATCC 27634 / DSM 579 / HB8).